A 134-amino-acid polypeptide reads, in one-letter code: Holo-[acyl-carrier-protein] synthase (134 aa).

Asp-8 and Glu-58 together coordinate Mg(2+).

It belongs to the P-Pant transferase superfamily. AcpS family. Mg(2+) is required as a cofactor.

It localises to the cytoplasm. The catalysed reaction is apo-[ACP] + CoA = holo-[ACP] + adenosine 3',5'-bisphosphate + H(+). In terms of biological role, transfers the 4'-phosphopantetheine moiety from coenzyme A to a Ser of acyl-carrier-protein. The chain is Holo-[acyl-carrier-protein] synthase from Ruminiclostridium cellulolyticum (strain ATCC 35319 / DSM 5812 / JCM 6584 / H10) (Clostridium cellulolyticum).